The primary structure comprises 528 residues: NAC domain-containing protein 13 (528 aa).

The NAC domain maps to 10 to 160 (LAPGFRFHPT…AYVLYKIYKK (151 aa)). The DNA-binding element occupies 107–166 (VGEKKTLVFHRGRAPNGERTNWVMHEYTLHKEELKRCGGEDVKDAYVLYKIYKKSGSGPK). The disordered stretch occupies residues 388-419 (EAPGTGDSSEFLNPVPSGISTTNEDDPSKDES). A helical transmembrane segment spans residues 499–519 (FFCLSIIGALCALFWVIIGTM).

In terms of assembly, interacts with RCD1. As to expression, expressed in roots, rosette leaves, shoot apex, stems and flowers.

It localises to the endoplasmic reticulum membrane. It is found in the nucleus. In terms of biological role, transcriptional activator activated by proteolytic cleavage through regulated intramembrane proteolysis (RIP). Involved in oxidative stress tolerance by mediating regulation of mitochondrial retrograde signaling during mitochondrial dysfunction. Interacts directly with the mitochondrial dysfunction DNA consensus motif 5'-CTTGNNNNNCA[AC]G-3', a cis-regulatory elements of several mitochondrial retrograde regulation-induced genes, and triggers increased oxidative stress tolerance. The polypeptide is NAC domain-containing protein 13 (Arabidopsis thaliana (Mouse-ear cress)).